A 54-amino-acid polypeptide reads, in one-letter code: Small ribosomal subunit protein uS14 (54 aa).

Zn(2+)-binding residues include cysteine 19, cysteine 22, cysteine 37, and cysteine 40.

Belongs to the universal ribosomal protein uS14 family. Zinc-binding uS14 subfamily. Part of the 30S ribosomal subunit. It depends on Zn(2+) as a cofactor.

Binds 16S rRNA, required for the assembly of 30S particles. This is Small ribosomal subunit protein uS14 from Aeropyrum pernix (strain ATCC 700893 / DSM 11879 / JCM 9820 / NBRC 100138 / K1).